The chain runs to 1091 residues: Sodium/potassium exporting P-type ATPase 1 (1091 aa).

The Cytoplasmic portion of the chain corresponds to 1–63; that stretch reads MGEGTTKENN…LGDDTKIDYK (63 aa). The chain crosses the membrane as a helical span at residues 64 to 84; that stretch reads AMVLHQVCNAMIMVLLISMII. Topologically, residues 85–90 are extracellular; that stretch reads SFAMHD. A helical membrane pass occupies residues 91–111; the sequence is WITGGVISFVIAVNVLIGLVQ. Over 112–282 the chain is Cytoplasmic; it reads EYKATKTMNS…TNVGTPLHRK (171 aa). The helical transmembrane segment at 283–303 threads the bilayer; sequence LSKLAVLLFWIAVLFAIIVMA. Topologically, residues 304–312 are extracellular; sequence SQKFDVDKR. A helical transmembrane segment spans residues 313–333; the sequence is VAIYAICVALSMIPSSLVVVL. Residues 334–815 are Cytoplasmic-facing; that stretch reads TITMSVGAAV…RRMTDNIQKF (482 aa). Asp-369 functions as the 4-aspartylphosphate intermediate in the catalytic mechanism. Residues Asp-369 and Thr-371 each coordinate Mg(2+). Residues Thr-371 and Glu-483 each contribute to the ATP site. Residues 499–525 form a disordered region; sequence ALTGEKSTNQSNENDQSSLSQHNEKPG. Polar residues predominate over residues 503-519; the sequence is EKSTNQSNENDQSSLSQ. Residues Lys-561, Arg-606, Thr-673, Gly-674, Asp-675, Arg-732, and Lys-738 each coordinate ATP. Asp-757 contributes to the Mg(2+) binding site. Asn-760 contributes to the ATP binding site. A helical membrane pass occupies residues 816-836; that stretch reads VLQLLAENVAQALYLIIGLVF. Topologically, residues 837 to 848 are extracellular; that stretch reads RDENGKSVFPLS. A helical transmembrane segment spans residues 849–869; sequence PVEVLWIIVVTSCFPAMGLGL. Topologically, residues 870–885 are cytoplasmic; the sequence is EKAAPDLMDRPPHDSE. The helical transmembrane segment at 886-906 threads the bilayer; the sequence is VGIFTWEVIIDTFAYGIIMTG. Over 907–943 the chain is Extracellular; it reads SCMASFTGSLYGINSGRLGHDCDGTYNSSCRDVYRSR. A helical transmembrane segment spans residues 944–964; that stretch reads SAAFATMTWCALILAWEVVDM. Topologically, residues 965–991 are cytoplasmic; it reads RRSFFRMHPDTDSPVKEFFRSIWGNQF. The chain crosses the membrane as a helical span at residues 992 to 1012; sequence LFWSIIFGFVSAFPVVYIPVI. Over 1013–1021 the chain is Extracellular; the sequence is NDKVFLHKP. A helical membrane pass occupies residues 1022-1042; that stretch reads IGAEWGLAIAFTIAFWIGAEL. Over 1043–1091 the chain is Cytoplasmic; the sequence is YKCGKRRYFKTQRAHNPENDLESNNKRDPFEAYSTSTTIHTEVNIGIKQ.

The protein belongs to the cation transport ATPase (P-type) (TC 3.A.3) family. Type IID subfamily. The cofactor is Mg(2+). The active site is phosphorylated in presence of sodium or potassium and in conditions of higher pH. Not phosphorylated in presence of calcium ions.

It is found in the cell membrane. The enzyme catalyses Na(+)(in) + ATP + H2O = Na(+)(out) + ADP + phosphate + H(+). The catalysed reaction is K(+)(in) + ATP + H2O = K(+)(out) + ADP + phosphate + H(+). Its function is as follows. Catalyzes the hydrolysis of ATP coupled with the export of sodium and potassium from the cell. May export potassium less efficiently. May transport other cations such as lithium. Sodium/potassium efflux ATPases are involved in salt tolerance and maintaining the membrane potential across the plasma membrane in high salinity (Na+) or alkaline (K+) environments. Is negatively modulated by SIS2/HAL3. The sequence is that of Sodium/potassium exporting P-type ATPase 1 from Saccharomyces cerevisiae (strain ATCC 204508 / S288c) (Baker's yeast).